The chain runs to 36 residues: Photosystem II reaction center protein M (36 aa).

Residues 5 to 25 (ILGVIATALFIIIPTSFLLIL) form a helical membrane-spanning segment.

This sequence belongs to the PsbM family. PSII is composed of 1 copy each of membrane proteins PsbA, PsbB, PsbC, PsbD, PsbE, PsbF, PsbH, PsbI, PsbJ, PsbK, PsbL, PsbM, PsbT, PsbX, PsbY, PsbZ, Psb30/Ycf12, at least 3 peripheral proteins of the oxygen-evolving complex and a large number of cofactors. It forms dimeric complexes.

It is found in the plastid. The protein localises to the chloroplast thylakoid membrane. One of the components of the core complex of photosystem II (PSII). PSII is a light-driven water:plastoquinone oxidoreductase that uses light energy to abstract electrons from H(2)O, generating O(2) and a proton gradient subsequently used for ATP formation. It consists of a core antenna complex that captures photons, and an electron transfer chain that converts photonic excitation into a charge separation. This subunit is found at the monomer-monomer interface. This chain is Photosystem II reaction center protein M, found in Chlorella vulgaris (Green alga).